Here is an 88-residue protein sequence, read N- to C-terminus: Auxin-responsive protein SAUR21 (88 aa).

The protein belongs to the ARG7 family.

It is found in the cell membrane. Its function is as follows. Functions as a positive effector of cell expansion through modulation of auxin transport. This Arabidopsis thaliana (Mouse-ear cress) protein is Auxin-responsive protein SAUR21.